Reading from the N-terminus, the 166-residue chain is tRNA-acetylating toxin (166 aa).

The tract at residues 1-22 is disordered; that stretch reads MSGYSAPRRISDADDVTSFSSG. Positions 1 to 162 constitute an N-acetyltransferase domain; the sequence is MSGYSAPRRI…LMLLMKDARA (162 aa). Y138 is an active-site residue.

The protein belongs to the acetyltransferase family. GNAT subfamily. In terms of assembly, homodimer, forms a complex with cognate antitoxin TacA.

The catalysed reaction is glycyl-tRNA(Gly) + acetyl-CoA = N-acetylglycyl-tRNA(Gly) + CoA + H(+). Its function is as follows. Toxic component of a type II toxin-antitoxin (TA) system. Overexpression of this gene alone in M.smegmatis inhibits growth, while overexpression of the tacA-tacT operon does not. Acetylates glycyl-tRNA(Gly) but not other tRNAs, blocks in vitro translation in the presence, but not absence, of acetyl-coenzyme A. Peptidyl-tRNA hydrolase (pth) counteracts the product of this enzyme in vitro. Neutralized by cognate antitoxin TacA. Does not seem to be active in laboratory growth conditions. Functionally, tacA-TacT both represses and derepresses expression of its own operon. The chain is tRNA-acetylating toxin from Mycobacterium tuberculosis (strain ATCC 25618 / H37Rv).